The primary structure comprises 100 residues: Small ribosomal subunit protein uS14c (100 aa).

Belongs to the universal ribosomal protein uS14 family. Part of the 30S ribosomal subunit.

The protein localises to the plastid. It localises to the chloroplast. Functionally, binds 16S rRNA, required for the assembly of 30S particles. The sequence is that of Small ribosomal subunit protein uS14c from Chloranthus spicatus (Chulantree).